The chain runs to 144 residues: tRNA-specific adenosine deaminase (144 aa).

The 116-residue stretch at 1-116 (MEQALKQAGI…SNLRYFNSSV (116 aa)) folds into the CMP/dCMP-type deaminase domain. Zn(2+) is bound at residue His-48. Glu-50 acts as the Proton donor in catalysis. Zn(2+) contacts are provided by Cys-78 and Cys-81.

This sequence belongs to the cytidine and deoxycytidylate deaminase family. As to quaternary structure, homodimer. Zn(2+) is required as a cofactor.

The catalysed reaction is adenosine(34) in tRNA + H2O + H(+) = inosine(34) in tRNA + NH4(+). Catalyzes the deamination of adenosine to inosine at the wobble position 34 of tRNA(Arg2). This is tRNA-specific adenosine deaminase from Rickettsia felis (strain ATCC VR-1525 / URRWXCal2) (Rickettsia azadi).